The following is a 338-amino-acid chain: Tetraacyldisaccharide 4'-kinase (338 aa).

51–58 (HLGGAGKT) provides a ligand contact to ATP.

The protein belongs to the LpxK family.

The catalysed reaction is a lipid A disaccharide + ATP = a lipid IVA + ADP + H(+). It participates in glycolipid biosynthesis; lipid IV(A) biosynthesis; lipid IV(A) from (3R)-3-hydroxytetradecanoyl-[acyl-carrier-protein] and UDP-N-acetyl-alpha-D-glucosamine: step 6/6. Functionally, transfers the gamma-phosphate of ATP to the 4'-position of a tetraacyldisaccharide 1-phosphate intermediate (termed DS-1-P) to form tetraacyldisaccharide 1,4'-bis-phosphate (lipid IVA). The protein is Tetraacyldisaccharide 4'-kinase of Rhodopseudomonas palustris (strain BisB5).